The sequence spans 383 residues: Transposase InsI for insertion sequence element IS30C (383 aa).

The Integrase catalytic domain maps to Val-213–Val-379.

The protein belongs to the transposase IS30 family.

Required for the transposition of the insertion element. The chain is Transposase InsI for insertion sequence element IS30C (insI3) from Escherichia coli (strain K12).